Reading from the N-terminus, the 360-residue chain is Histidinol-phosphate aminotransferase (360 aa).

The residue at position 218 (K218) is an N6-(pyridoxal phosphate)lysine.

This sequence belongs to the class-II pyridoxal-phosphate-dependent aminotransferase family. Histidinol-phosphate aminotransferase subfamily. As to quaternary structure, homodimer. Requires pyridoxal 5'-phosphate as cofactor.

The enzyme catalyses L-histidinol phosphate + 2-oxoglutarate = 3-(imidazol-4-yl)-2-oxopropyl phosphate + L-glutamate. It functions in the pathway amino-acid biosynthesis; L-histidine biosynthesis; L-histidine from 5-phospho-alpha-D-ribose 1-diphosphate: step 7/9. This Chlorobium phaeovibrioides (strain DSM 265 / 1930) (Prosthecochloris vibrioformis (strain DSM 265)) protein is Histidinol-phosphate aminotransferase.